We begin with the raw amino-acid sequence, 393 residues long: Cytotoxic and regulatory T-cell molecule (393 aa).

Residues 1 to 17 (MWWRVLSLLAWFPLQEA) form the signal peptide. Positions 18–114 (SLTNHTETIT…VSTKEVKVIV (97 aa)) constitute an Ig-like V-type domain. Residues 18-287 (SLTNHTETIT…YLGLARKKSG (270 aa)) lie on the Extracellular side of the membrane. N-linked (GlcNAc...) asparagine glycosylation is found at asparagine 21, asparagine 87, and asparagine 178. 2 disulfides stabilise this stretch: cysteine 38–cysteine 98 and cysteine 141–cysteine 196. One can recognise an Ig-like C2-type domain in the interval 118–210 (PFKPILEASV…RGLQGRKLVA (93 aa)). Residues 225–273 (SDALERNSLSSQDPQQPTSTVSVTEDSSTSEIDKEEKEQTTQDPDLTTE) are disordered. Over residues 231 to 241 (NSLSSQDPQQP) the composition is skewed to polar residues. The segment covering 242-254 (TSTVSVTEDSSTS) has biased composition (low complexity). Residues 255-264 (EIDKEEKEQT) show a composition bias toward basic and acidic residues. The helical transmembrane segment at 288–308 (ILLLTLVSFLIFILFIIVQLF) threads the bilayer. The Cytoplasmic portion of the chain corresponds to 309–393 (IMKLRKAHVI…KHIQVPESIV (85 aa)). Basic and acidic residues-rich tracts occupy residues 328-348 (HTLE…EEKN) and 374-387 (ENVQ…KHIQ). Disordered regions lie at residues 328-354 (HTLE…SSHP) and 374-393 (ENVQ…ESIV). Residues 390-393 (ESIV) carry the PDZ-binding motif.

The protein belongs to the nectin family. As to quaternary structure, monomer. May form homodimer (via Ig-like V-type domain). Interacts (via Ig-like V-type domain) with CADM1 (via Ig-like V-type domain); the interaction competes with CRTAM homodimerization and CADM1 homodimerization. Interacts (via PDZ-binding motif) with SCRIB (via PDZ domain 3); the interaction promotes CRTAM and SCRIB polarization in a subset of CD4+ T-cells. As to expression, in the immune system, expression is restricted to activated class-I MHC-restricted cells, including NKT and CD8 T-cells. Strongly expressed in spleen, thymus, small intestine, peripheral blood leukocyte, and in Purkinje neurons in cerebellum. Expressed at much lower levels in testis, ovary, colon, lung and lymphoid tissues.

It is found in the cell membrane. In terms of biological role, mediates heterophilic cell-cell adhesion which regulates the activation, differentiation and tissue retention of various T-cell subsets. Interaction with CADM1 promotes natural killer (NK) cell cytotoxicity and IFNG/interferon-gamma secretion by CD8+ T-cells in vitro as well as NK cell-mediated rejection of tumors expressing CADM1 in vivo. Regulates CD8+ T-cell proliferation in response to T-cell receptor (TCR) activation. Appears to be dispensable for CD8+ T-cell-mediated cytotoxicity. Interaction with SCRIB promotes the late phase of cellular polarization of a subset of CD4+ T-cells, which in turn regulates TCR-mediated proliferation and IFNG, IL17 and IL22 production. By interacting with CADM1 on CD8+ dendritic cells, regulates the retention of activated CD8+ T-cells within the draining lymph node. Required for the intestinal retention of intraepithelial CD4+ CD8+ T-cells and, to a lesser extent, intraepithelial and lamina propria CD8+ T-cells and CD4+ T-cells. Interaction with CADM1 promotes the adhesion to gut-associated CD103+ dendritic cells, which may facilitate the expression of gut-homing and adhesion molecules on T-cells and the conversion of CD4+ T-cells into CD4+ CD8+ T-cells. This is Cytotoxic and regulatory T-cell molecule from Homo sapiens (Human).